The following is a 482-amino-acid chain: MAIREIKDVERGEIVNKVEDLGKPFLTHEDDEKESENNESYLMVLFSTFVAVCGSFEFGSCVGYSAPTQSSIRQDLNLSLAEFSMFGSILTIGAMLGAVMSGKISDFSGRKGAMRTSACFCITGWLAVFFTKGALLLDVGRFFTGYGIGVFSYVVPVYIAEISPKNLRGGLTTLNQLMIVIGSSVSFLIGSLISWKTLALTGLAPCIVLLFGLCFIPESPRWLAKAGHEKEFRVALQKLRGKDADITNEADGIQVSIQALEILPKARIQDLVSKKYGRSVIIGVSLMVFQQFVGINGIGFYASETFVKAGFTSGKLGTIAIACVQVPITVLGTILIDKSGRRPLIMISAGGIFLGCILTGTSFLLKGQSLLLEWVPSLAVGGVLIYVAAFSIGMGPVPWVIMSEIFPINVKGIAGSLVVLVNWSGAWAVSYTFNFLMSWSSPGTFYLYSAFAAATIIFVAKMVPETKGKTLEEIQACIRRET.

The next 12 membrane-spanning stretches (helical) occupy residues 42–62, 80–100, 117–137, 142–162, 173–193, 197–217, 280–300, 316–336, 344–364, 382–402, 413–433, and 443–463; these read LMVL…GSCV, LAEF…GAVM, SACF…ALLL, FFTG…IAEI, TLNQ…GSLI, TLAL…CFIP, VIIG…GIGF, LGTI…TILI, LIMI…TSFL, GVLI…WVIM, IAGS…SYTF, and GTFY…AKMV.

It belongs to the major facilitator superfamily. Sugar transporter (TC 2.A.1.1) family.

It is found in the membrane. Sugar transporter. The protein is Sugar transporter ERD6-like 16 of Arabidopsis thaliana (Mouse-ear cress).